A 553-amino-acid polypeptide reads, in one-letter code: MQATVKRYPTTPISGQTMGTSGLRKRASEVENTPNYLENFVNAMFNAASNLQKPGKIIIGGDGRYLNLKALDIIIRVALSRGFTDIVVGKSGFMSTPAESATIIRRKAEAGFIMTASHNPAGKDHGDFGLKLNMSNGGPAPLEVTSKIEESARNIKEIVIAELNKPLTIDTIGDIEIECEGKKAIVHVIDPLEDYIAYLHECFDFEKLKQFVSKYHLKVQVDGFNAVTGIYNKKVFCELLGLPESSLKNAIPMPDFGGKHPDPNLTYAAELVHAVIPEDSPYDIGFAFDGDGDRNLIVGRGAFVSPSDSLAILSTKYNDIPFFVKNGFKGVARSMPTSAAVDHVTSITETPTGWKFFGNLMDSGKISLCGEESFGTGCCGIREKDGIWAALCWVSILAAESERAQRLVGVKEILENHWAKYGRNYYQRYDFDEVDKKAAEDMMQMMRDNAKTVKCDLNGVPLKFCDDFEYHDSVDGSVTSKQGIRFVFEDGSRIIFRLSGTGSVGATIRVYFDKYSKDYKADQNKMLADMVTVAYAVSQITKFTGREKPSVVT.

The interval 1-24 (MQATVKRYPTTPISGQTMGTSGLR) is disordered. Polar residues predominate over residues 11–20 (TPISGQTMGT). Substrate is bound by residues threonine 20, arginine 24, 117-118 (SH), and lysine 131. The Phosphoserine intermediate role is filled by serine 117. Serine 117 is a Mg(2+) binding site. The Mg(2+) site is built by aspartate 289, aspartate 291, and aspartate 293. Substrate is bound by residues 293–294 (DR), threonine 352, 371–373 (EES), lysine 384, and arginine 509.

Belongs to the phosphohexose mutase family. Requires Mg(2+) as cofactor.

It localises to the cytoplasm. It carries out the reaction alpha-D-glucose 1-phosphate = alpha-D-glucose 6-phosphate. Functionally, this enzyme participates in both the breakdown and synthesis of glucose. This chain is Phosphoglucomutase (pgm), found in Entamoeba dispar.